We begin with the raw amino-acid sequence, 1408 residues long: Protein patched homolog 1 (1408 aa).

Residues 1-20 are disordered; that stretch reads MLTLLEPPGAKRSPTVGNYN. The Cytoplasmic segment spans residues 1–136; the sequence is MLTLLEPPGA…GNTVHRNAWS (136 aa). The chain crosses the membrane as a helical span at residues 137–157; sequence IILAVSMIFAVCCYGLQYVHI. The Extracellular segment spans residues 158–649; sequence ETDIVKLWVA…STSIADMLEE (492 aa). The disordered stretch occupies residues 455-479; it reads STAPIPTTTTLSPEEARAAEEKEKK. A compositionally biased stretch (basic and acidic residues) spans 468–479; that stretch reads EEARAAEEKEKK. N-linked (GlcNAc...) asparagine glycosylation occurs at asparagine 599. A helical membrane pass occupies residues 650–670; that stretch reads FCQFNYTIILAGYALMLAYAI. The SSD domain maps to 654-816; it reads NYTIILAGYA…LTIYPAIISI (163 aa). Residues 671-686 lie on the Cytoplasmic side of the membrane; sequence VTQARFDNCLPATESS. Residues 687 to 707 form a helical membrane-spanning segment; sequence MGLALAGVLVVTFASVAGLGL. At 708-709 the chain is on the extracellular side; sequence AT. The helical transmembrane segment at 710 to 730 threads the bilayer; sequence WFGIEFNAATTQIVPFLTLGI. At 731–765 the chain is on the cytoplasmic side; sequence GVDNMFMLLHNYRDVVKLAGGHAEMAILMRETGMS. The chain crosses the membrane as a helical span at residues 766–786; sequence ILCTSINNILSFLTGTLLPIP. Residues 787–795 lie on the Extracellular side of the membrane; sequence ALRSFCAQS. The chain crosses the membrane as a helical span at residues 796 to 816; sequence SILLTFNFIAILTIYPAIISI. Residues 817–901 are Cytoplasmic-facing; the sequence is DLRRKKAQRR…YYYIPFISKP (85 aa). The chain crosses the membrane as a helical span at residues 902–922; that stretch reads ASKVAIIVGCCALLGASFIGM. Over 923-1175 the chain is Extracellular; the sequence is RQSTLGLELG…QGIAFTFWEQ (253 aa). Asparagine 1026 and asparagine 1036 each carry an N-linked (GlcNAc...) asparagine glycan. Residues 1176-1196 form a helical membrane-spanning segment; it reads YLFLTGNLMQAISIITISVFC. Residues 1197–1217 lie on the Cytoplasmic side of the membrane; that stretch reads VISVLLFNPWAALMVVCILGI. The next 2 helical transmembrane spans lie at 1218 to 1238 and 1239 to 1259; these read MTCELAGFMGLVGIKLNPVSA and VTLITAVGIGVEFTVHVVVSF. Residues 1260–1276 are Extracellular-facing; sequence LTALGTRSQRTSSAVDR. A helical transmembrane segment spans residues 1277-1297; that stretch reads VFVPVIHGSFSTLLGILMLGF. Topologically, residues 1298 to 1305 are cytoplasmic; the sequence is SEFEFVVK. The helical transmembrane segment at 1306 to 1326 threads the bilayer; that stretch reads YFFIVMTALICIGIINGLILL. The Extracellular portion of the chain corresponds to 1327–1408; the sequence is PVLLSWFGPR…GNNTRRLPAV (82 aa). Residues 1342 to 1408 are disordered; the sequence is TGGKTTLTLP…GNNTRRLPAV (67 aa). Positions 1387 to 1408 are enriched in low complexity; the sequence is TTRTSGGNRGTVGNNTRRLPAV.

The protein belongs to the patched family. Germ line and its progenitors.

The protein resides in the membrane. Functionally, required but not essential for cytokinesis of mitotically proliferating germ cells. This chain is Protein patched homolog 1 (ptc-1), found in Caenorhabditis elegans.